The sequence spans 73 residues: Dipeptidyl peptidase 3 (73 aa).

The protein belongs to the peptidase M49 family. The cofactor is Zn(2+).

It is found in the membrane. The enzyme catalyses Release of an N-terminal dipeptide from a peptide comprising four or more residues, with broad specificity. Also acts on dipeptidyl 2-naphthylamides.. Degrades neuropeptide proctolin (RYLPT) by cleavage between Tyr and Leu residues. The sequence is that of Dipeptidyl peptidase 3 from Blaberus craniifer (Death's head cockroach).